Here is an 811-residue protein sequence, read N- to C-terminus: Endothelin-converting enzyme 2 (811 aa).

Topologically, residues 1-106 are cytoplasmic; sequence MNVALQELGA…QLLGSRTQLE (106 aa). The segment at 22–64 is disordered; sequence LRDEDAPETPVEGGASPDAMEVGKGASPFSPGPSPGMTPGTPR. Residues 107–127 traverse the membrane as a helical; Signal-anchor for type II membrane protein segment; the sequence is LVLAGASLLLAALLLGCLVAL. At 128 to 811 the chain is on the lumenal side; the sequence is GVQYHRDPSH…MNPGQLCEVW (684 aa). The region spanning 139–811 is the Peptidase M13 domain; that stretch reads TCLTEACIRV…MNPGQLCEVW (673 aa). 5 disulfide bridges follow: cysteine 140/cysteine 145, cysteine 163/cysteine 796, cysteine 171/cysteine 756, cysteine 227/cysteine 476, and cysteine 685/cysteine 808. N-linked (GlcNAc...) asparagine glycosylation is found at asparagine 207, asparagine 211, asparagine 252, asparagine 312, asparagine 357, asparagine 424, and asparagine 580. Histidine 648 contacts Zn(2+). Residue glutamate 649 is part of the active site. Histidine 652 serves as a coordination point for Zn(2+). N-linked (GlcNAc...) asparagine glycans are attached at residues asparagine 673 and asparagine 681. Glutamate 708 contacts Zn(2+). The active-site Proton donor is the aspartate 712.

Belongs to the peptidase M13 family. Zn(2+) is required as a cofactor.

It localises to the golgi apparatus membrane. The protein resides in the cytoplasmic vesicle. The protein localises to the secretory vesicle membrane. The enzyme catalyses Hydrolysis of the 21-Trp-|-Val-22 bond in big endothelin to form endothelin 1.. Converts big endothelin-1 to endothelin-1. Also involved in the processing of various neuroendocrine peptides, including neurotensin, angiotensin I, substance P, proenkephalin-derived peptides, and prodynorphin-derived peptides. May play a role in amyloid-beta processing. The polypeptide is Endothelin-converting enzyme 2 (Homo sapiens (Human)).